Reading from the N-terminus, the 565-residue chain is Putative ribonucleoside-diphosphate reductase large subunit (565 aa).

Residues Ser-60, 74–75, Gly-103, 256–260, and 400–404 each bind substrate; these read SC, NLCNE, and PNANS. Cys-75 and Cys-273 are joined by a disulfide. The Proton acceptor role is filled by Asn-256. Cys-258 (cysteine radical intermediate) is an active-site residue. The active-site Proton acceptor is the Glu-260.

The protein belongs to the ribonucleoside diphosphate reductase large chain family. Heterotetramer composed of a homodimer of the large subunit (R1) and a homodimer of the small subunit (R2). Larger multisubunit protein complex are also active, composed of (R1)n(R2)n.

The catalysed reaction is a 2'-deoxyribonucleoside 5'-diphosphate + [thioredoxin]-disulfide + H2O = a ribonucleoside 5'-diphosphate + [thioredoxin]-dithiol. With respect to regulation, under complex allosteric control mediated by deoxynucleoside triphosphates and ATP binding. The type of nucleotide bound at the specificity site determines substrate preference. It seems probable that ATP makes the enzyme reduce CDP and UDP, dGTP favors ADP reduction and dTTP favors GDP reduction. In terms of biological role, ribonucleoside-diphosphate reductase holoenzyme provides the precursors necessary for viral DNA synthesis. Allows virus growth in non-dividing cells. Catalyzes the biosynthesis of deoxyribonucleotides from the corresponding ribonucleotides. In Frog virus 3 (isolate Goorha) (FV-3), this protein is Putative ribonucleoside-diphosphate reductase large subunit.